A 140-amino-acid chain; its full sequence is Putative pre-16S rRNA nuclease (140 aa).

The protein belongs to the YqgF nuclease family.

It localises to the cytoplasm. Functionally, could be a nuclease involved in processing of the 5'-end of pre-16S rRNA. The sequence is that of Putative pre-16S rRNA nuclease from Actinobacillus succinogenes (strain ATCC 55618 / DSM 22257 / CCUG 43843 / 130Z).